Reading from the N-terminus, the 288-residue chain is Stage IV sporulation protein FB (288 aa).

Over 1 to 10 (MNKWLDLILK) the chain is Mother cell cytoplasmic. A helical membrane pass occupies residues 11–30 (IHVHPFLWIIAALGLLTGHM). Residue lysine 31 is a topological domain, forespore intermembrane space. The helical transmembrane segment at 32-56 (ALLCLLLIVLIHELGHAALAVFFSW) threads the bilayer. Histidine 43 lines the Zn(2+) pocket. Glutamate 44 is an active-site residue. Histidine 47 contributes to the Zn(2+) binding site. Over 57–83 (RIKRVFLLPFGGTVEVEEHGNRPLKEE) the chain is Mother cell cytoplasmic. A helical transmembrane segment spans residues 84–105 (FAVIIAGPLQHIWLQFAAWMLA). The Forespore intermembrane space portion of the chain corresponds to 106–126 (EVSVIHQHTFELFTFYNLSIL). The chain crosses the membrane as a helical span at residues 127 to 146 (FVNLLPIWPLDGGKLLFLLF). Aspartate 137 serves as a coordination point for Zn(2+). The Mother cell cytoplasmic segment spans residues 147–161 (SKQLPFQKAHRLNLK). A helical transmembrane segment spans residues 162–178 (TSLCFCLLLGCWVLFVI). Proline 179 is a topological domain (forespore intermembrane space). A helical transmembrane segment spans residues 180-199 (LQISAWVLFVFLAVSLFEEY). The Mother cell cytoplasmic portion of the chain corresponds to 200–288 (RQRHYIHVRF…SSMEELLLPY (89 aa)).

The protein belongs to the peptidase M50B family. As to quaternary structure, forms a complex with SpoIVFA and BofA localized in the mother-cell membrane surrounding the forespore. Zn(2+) serves as cofactor.

The protein resides in the forespore outer membrane. Implicated in the coupling of mother cell to forespore gene expression. Required for spore formation. Processes the pro-sigma K factor. The polypeptide is Stage IV sporulation protein FB (spoIVFB) (Bacillus subtilis (strain 168)).